A 214-amino-acid chain; its full sequence is Histidine biosynthesis bifunctional protein HisIE (214 aa).

The segment at Met1–Val114 is phosphoribosyl-AMP cyclohydrolase. The interval Val115–Asn214 is phosphoribosyl-ATP pyrophosphohydrolase.

It in the N-terminal section; belongs to the PRA-CH family. In the C-terminal section; belongs to the PRA-PH family.

Its subcellular location is the cytoplasm. The catalysed reaction is 1-(5-phospho-beta-D-ribosyl)-ATP + H2O = 1-(5-phospho-beta-D-ribosyl)-5'-AMP + diphosphate + H(+). The enzyme catalyses 1-(5-phospho-beta-D-ribosyl)-5'-AMP + H2O = 1-(5-phospho-beta-D-ribosyl)-5-[(5-phospho-beta-D-ribosylamino)methylideneamino]imidazole-4-carboxamide. Its pathway is amino-acid biosynthesis; L-histidine biosynthesis; L-histidine from 5-phospho-alpha-D-ribose 1-diphosphate: step 2/9. It functions in the pathway amino-acid biosynthesis; L-histidine biosynthesis; L-histidine from 5-phospho-alpha-D-ribose 1-diphosphate: step 3/9. This Thermus thermophilus (strain ATCC BAA-163 / DSM 7039 / HB27) protein is Histidine biosynthesis bifunctional protein HisIE.